The primary structure comprises 429 residues: TNFAIP3-interacting protein 2 (429 aa).

Serine 7 bears the Phosphoserine mark. A coiled-coil region spans residues 29–117; the sequence is QRLRRLQDQL…MQQLLSQPQH (89 aa). Over residues 177–195 the composition is skewed to basic and acidic residues; sequence HAQRNVGERSPDQSEHTDG. Positions 177–199 are disordered; that stretch reads HAQRNVGERSPDQSEHTDGHTSV. 2 coiled-coil regions span residues 196–226 and 255–340; these read HTSV…LNAK and ELMR…QVSW. Residues 289-347 form a ubiquitin-binding domain (UBD) region; sequence RDAALERVQMLEQQILAYKDDFMSERADRERAQSRIQELEEKVASLLHQVSWRQDSREP. The disordered stretch occupies residues 372–400; that stretch reads PGGWRPGTGSQQPEPPAEGGHPGAAQRGQ. Residues 388 to 397 show a composition bias toward low complexity; sequence AEGGHPGAAQ. A CCHC NOA-type zinc finger spans residues 397 to 429; sequence QRGQGDLQCPHCLQCFSDEQGEELLRHVAECCQ. Residues cysteine 405, cysteine 408, histidine 423, and cysteine 427 each contribute to the Zn(2+) site.

In terms of assembly, interacts with STK11/LKB1, TNFAIP3, IKBKG, NFKB1, MAP3K8, TEK, RIPK1, CHUK, IKBKB and SMARCD1. Interacts with polyubiquitin. (Microbial infection) Interacts with severe fever with thrombocytopenia syndrome virus (SFTSV) NSs; this interaction promotes TPL2 complex formation and signaling activity leading to IL-10 production. In vitro phosphorylated by CHUK. Post-translationally, ubiquitinated; undergoes 'Lys-48'-linked polyubiquitination probably leading to constitutive proteasomal degradation which can be impaired by IKK-A/CHUK or IKBKB probably involving deubiquitination. Deubiquitinated by USP35; leading to stabilization and inhibition of TNFalpha-induced NF-kappa-B activation. In terms of tissue distribution, ubiquitously expressed in all tissues examined.

It is found in the cytoplasm. The protein localises to the nucleus. Its function is as follows. Inhibits NF-kappa-B activation by blocking the interaction of RIPK1 with its downstream effector NEMO/IKBKG. Forms a ternary complex with NFKB1 and MAP3K8 but appears to function upstream of MAP3K8 in the TLR4 signaling pathway that regulates MAP3K8 activation. Involved in activation of the MEK/ERK signaling pathway during innate immune response; this function seems to be stimulus- and cell type specific. Required for stability of MAP3K8. Involved in regulation of apoptosis in endothelial cells; promotes TEK agonist-stimulated endothelial survival. May act as transcriptional coactivator when translocated to the nucleus. Enhances CHUK-mediated NF-kappa-B activation involving NF-kappa-B p50-p65 and p50-c-Rel complexes. This chain is TNFAIP3-interacting protein 2, found in Homo sapiens (Human).